The sequence spans 549 residues: DNA polymerase lambda (549 aa).

The BRCT domain occupies 17 to 116 (DPDGMFRGVS…ERLPEHKFAI (100 aa)). The disordered stretch occupies residues 126–197 (KEGGAAGSGV…ASGDSKETIA (72 aa)). The span at 149 to 175 (PENRKETAGGNRESRDAIAHPNEDSDV) shows a compositional bias: basic and acidic residues. The span at 180 to 197 (STCTSSQSASGDSKETIA) shows a compositional bias: polar residues. The tract at residues 233 to 247 (NIYRALGDDRRSFSY) is DNA-binding. The active site involves His280. The DNA-binding stretch occupies residues 315–318 (GPAT). DCTP is bound by residues Arg356, 387–390 (SYRR), and 396–399 (GDMD). The segment at 390 to 399 (RGKSSCGDMD) is involved in primer binding. The Mn(2+) site is built by Asp397, Asp399, and Asp464. Residues 438–479 (IEGTDCGVDTYFGLCTYPGRELRHRIDLKVYPRNRHAFGLLA) are DNA-binding. Residue Asn487 participates in dCTP binding.

The protein belongs to the DNA polymerase type-X family. As to quaternary structure, interacts with PCNA. Mn(2+) is required as a cofactor. As to expression, expressed in proliferating tissues. Expressed in roots, root apex, young leaves, shoot apical meristem (SAM), flag leaves and panicles.

It is found in the nucleus. It catalyses the reaction DNA(n) + a 2'-deoxyribonucleoside 5'-triphosphate = DNA(n+1) + diphosphate. Its function is as follows. Repair polymerase involved in base excision repair (BER) and responsible for repair of lesions that give rise to abasic (AP) sites in DNA. Has both DNA polymerase and terminal transferase activities. Has a 5'-deoxyribose-5-phosphate lyase (dRP lyase) activity. This is DNA polymerase lambda from Oryza sativa subsp. japonica (Rice).